A 926-amino-acid polypeptide reads, in one-letter code: Ubiquitin carboxyl-terminal hydrolase 4 (926 aa).

The 124-residue stretch at 205-328 (SQMEILLIDI…WLKSNYGRQV (124 aa)) folds into the Rhodanese domain. Ser-443 is subject to Phosphoserine. Residues 562–923 (VGLENLGNSC…NAYVLFYHRV (362 aa)) form the USP domain. Residue Cys-571 is the Nucleophile of the active site. Catalysis depends on His-880, which acts as the Proton acceptor.

Belongs to the peptidase C19 family. As to quaternary structure, interacts with BRO1, RFU1 and VPS32. Associates with the 26S proteasome.

It is found in the cytoplasm. The protein localises to the late endosome membrane. The catalysed reaction is Thiol-dependent hydrolysis of ester, thioester, amide, peptide and isopeptide bonds formed by the C-terminal Gly of ubiquitin (a 76-residue protein attached to proteins as an intracellular targeting signal).. Its activity is regulated as follows. RFU1 is an inhibitor of deubiquitination activity. Functionally, ubiquitin thioesterase that acts at the late endosome/prevacuolar compartment to recover ubiquitin from ubiquitinated membrane proteins en route to the vacuole. Also removes ubiquitin from soluble proteins targeted to proteasomes. Is essential to maintain a normal level of free ubiquitin. Involved in the ammonium-induced down-regulation of the GAP1 permease and the UME3 destruction in response to oxidative stress. Has a role in the RAD9 checkpoint response to TOP1 poisons. Required for promoting coordination of DNA replication and avoids DNA overreplication. This is Ubiquitin carboxyl-terminal hydrolase 4 (DOA4) from Saccharomyces cerevisiae (strain ATCC 204508 / S288c) (Baker's yeast).